The sequence spans 488 residues: MAKRTLGLGNAARAKKQKLEQEGKSKSPTPSGSEDTTNQLTIELPETVDANDEIAQLRGLYKTYIDSERDSDLILNGIIHECDRLLREKVANSSGSKENQVSAELPAMFYKIYAIALSELANFHTDDIDQVSEFFDASLERVNDGLEKYPTDIDLVFTKAKILINQIVLQYVSQLKLESSVEEAHIKNMDIKGKLDAALRVYESAEKKAKESEDYLAFNSEEYWDILEAVDDLLDIVDNFGRQEEEEEEEEEEEEEEEEKEDHAKKGGELTELDVADAEAFAAAQEKIEGEEKGSETSDNDEEDNEEEEEEEEDEDEEEEIELPETHPLYIIKTTDEYNQWWRDHTLTYLSNLKQLSNASPRLLREVNHRLGQSYLQEAEVPSSVFTTLRYDEDYSGIEELEGLSEDDAKRVAQELIIKALEYLKAAEDKDEPESWVNIAEAMISLANLYEVESKEQEQLYQDAEKILTKANNATNGKYQDALDNLLG.

Disordered regions lie at residues 1 to 38 (MAKRTLGLGNAARAKKQKLEQEGKSKSPTPSGSEDTTN), 242 to 272 (RQEEEEEEEEEEEEEEEEKEDHAKKGGELTE), and 287 to 328 (KIEG…ETHP). Residues 26 to 38 (KSPTPSGSEDTTN) are compositionally biased toward polar residues. Positions 244–260 (EEEEEEEEEEEEEEEEK) are enriched in acidic residues. The span at 287–296 (KIEGEEKGSE) shows a compositional bias: basic and acidic residues. Residues 298–323 (SDNDEEDNEEEEEEEEDEDEEEEIEL) show a composition bias toward acidic residues.

The protein belongs to the ETT1 family.

The protein resides in the nucleus. Required for correct translation termination and probably involved in regulation of hypoxic gene expression. This is Enhancer of translation termination 1 (ETT1) from Lodderomyces elongisporus (strain ATCC 11503 / CBS 2605 / JCM 1781 / NBRC 1676 / NRRL YB-4239) (Yeast).